The sequence spans 380 residues: DNA replication and repair protein RecF (380 aa).

ATP is bound at residue 30 to 37 (GENAQGKT).

Belongs to the RecF family.

The protein resides in the cytoplasm. In terms of biological role, the RecF protein is involved in DNA metabolism; it is required for DNA replication and normal SOS inducibility. RecF binds preferentially to single-stranded, linear DNA. It also seems to bind ATP. The polypeptide is DNA replication and repair protein RecF (Synechococcus sp. (strain JA-3-3Ab) (Cyanobacteria bacterium Yellowstone A-Prime)).